The following is a 680-amino-acid chain: DNA-directed RNA polymerase subunit beta' (680 aa).

Residues Cys-69, Cys-71, Cys-87, and Cys-90 each contribute to the Zn(2+) site. 3 residues coordinate Mg(2+): Asp-489, Asp-491, and Asp-493.

This sequence belongs to the RNA polymerase beta' chain family. RpoC1 subfamily. In plastids the minimal PEP RNA polymerase catalytic core is composed of four subunits: alpha, beta, beta', and beta''. When a (nuclear-encoded) sigma factor is associated with the core the holoenzyme is formed, which can initiate transcription. It depends on Mg(2+) as a cofactor. Zn(2+) is required as a cofactor.

It is found in the plastid. The protein resides in the chloroplast. The catalysed reaction is RNA(n) + a ribonucleoside 5'-triphosphate = RNA(n+1) + diphosphate. Its function is as follows. DNA-dependent RNA polymerase catalyzes the transcription of DNA into RNA using the four ribonucleoside triphosphates as substrates. This is DNA-directed RNA polymerase subunit beta' from Lepidium virginicum (Virginia pepperweed).